Consider the following 785-residue polypeptide: Penicillin-binding protein 1A (785 aa).

The Cytoplasmic segment spans residues 1-6 (MYKSLF). The chain crosses the membrane as a helical; Signal-anchor for type II membrane protein span at residues 7–27 (FFLKIFAILILLGCSVTAYII). Over 28 to 785 (YHYSHDLPDY…GISDQSQEIY (758 aa)) the chain is Periplasmic. A transglycosylase region spans residues 49-220 (TRIYSRDGKL…SELNPDKNYS (172 aa)). Residue E87 is the Proton donor; for transglycosylase activity of the active site. The segment at 398–711 (DVIVVEPIKD…SNVVLPIFID (314 aa)) is transpeptidase. Residue S457 is the Acyl-ester intermediate; for transpeptidase activity of the active site.

This sequence in the N-terminal section; belongs to the glycosyltransferase 51 family. In the C-terminal section; belongs to the transpeptidase family.

It localises to the cell inner membrane. The catalysed reaction is [GlcNAc-(1-&gt;4)-Mur2Ac(oyl-L-Ala-gamma-D-Glu-L-Lys-D-Ala-D-Ala)](n)-di-trans,octa-cis-undecaprenyl diphosphate + beta-D-GlcNAc-(1-&gt;4)-Mur2Ac(oyl-L-Ala-gamma-D-Glu-L-Lys-D-Ala-D-Ala)-di-trans,octa-cis-undecaprenyl diphosphate = [GlcNAc-(1-&gt;4)-Mur2Ac(oyl-L-Ala-gamma-D-Glu-L-Lys-D-Ala-D-Ala)](n+1)-di-trans,octa-cis-undecaprenyl diphosphate + di-trans,octa-cis-undecaprenyl diphosphate + H(+). It carries out the reaction Preferential cleavage: (Ac)2-L-Lys-D-Ala-|-D-Ala. Also transpeptidation of peptidyl-alanyl moieties that are N-acyl substituents of D-alanine.. It functions in the pathway cell wall biogenesis; peptidoglycan biosynthesis. Its function is as follows. Cell wall formation. Synthesis of cross-linked peptidoglycan from the lipid intermediates. The enzyme has a penicillin-insensitive transglycosylase N-terminal domain (formation of linear glycan strands) and a penicillin-sensitive transpeptidase C-terminal domain (cross-linking of the peptide subunits). This is Penicillin-binding protein 1A (mrcA) from Rickettsia typhi (strain ATCC VR-144 / Wilmington).